A 189-amino-acid chain; its full sequence is ADP-ribosylation factor H (189 aa).

GTP contacts are provided by residues Asp-34–Thr-40, Asp-75–Gln-79, and Asn-134–Asp-137.

Belongs to the small GTPase superfamily. Arf family.

It localises to the golgi apparatus. GTP-binding protein that may be involved in protein trafficking. May modulate vesicle budding and uncoating within the Golgi apparatus. The sequence is that of ADP-ribosylation factor H (arrH) from Dictyostelium discoideum (Social amoeba).